Consider the following 478-residue polypeptide: Methionine aminopeptidase 2 (478 aa).

The interval 1-123 (MAGVEEASSF…DPPSVPICDL (123 aa)) is disordered. An N-acetylalanine modification is found at A2. The span at 36–46 (KKKRRKKKKGK) shows a compositional bias: basic residues. A compositionally biased stretch (basic and acidic residues) spans 55–79 (ELDKESGTSVDEVAKQLERQALEEK). A phosphoserine; alternate mark is found at S60 and S63. Residues S60 and S63 are each glycosylated (O-linked (GlcNAc) serine; alternate). Residues 80-92 (EKDDDDEDGDGDG) show a composition bias toward acidic residues. The span at 97–109 (GKKKKKKKKKRGP) shows a compositional bias: basic residues. Position 231 (H231) interacts with substrate. The a divalent metal cation site is built by D251, D262, and H331. Residue H339 coordinates substrate. E364 and E459 together coordinate a divalent metal cation.

It belongs to the peptidase M24A family. Methionine aminopeptidase eukaryotic type 2 subfamily. Binds EIF2S1 at low magnesium concentrations. Interacts strongly with the eIF-2 gamma-subunit EIF2S3. It depends on Co(2+) as a cofactor. Zn(2+) serves as cofactor. The cofactor is Mn(2+). Requires Fe(2+) as cofactor. O-glycosylated; contains 12 O-linked GlcNAc. In terms of processing, contains approximately 12 O-linked N-acetylglucosamine (GlcNAc) residues. O-glycosylation is required for EIF2S1 binding.

It localises to the cytoplasm. It carries out the reaction Release of N-terminal amino acids, preferentially methionine, from peptides and arylamides.. Its function is as follows. Cotranslationally removes the N-terminal methionine from nascent proteins. The N-terminal methionine is often cleaved when the second residue in the primary sequence is small and uncharged (Met-Ala-, Cys, Gly, Pro, Ser, Thr, or Val). Protects eukaryotic initiation factor EIF2S1 from translation-inhibiting phosphorylation by inhibitory kinases such as EIF2AK2/PKR and EIF2AK1/HCR. Plays a critical role in the regulation of protein synthesis. This chain is Methionine aminopeptidase 2 (Metap2), found in Rattus norvegicus (Rat).